Reading from the N-terminus, the 215-residue chain is Outer-membrane lipoprotein LolB (215 aa).

The first 19 residues, 1-19 (MSKLRKITSLIFLTIIMVG), serve as a signal peptide directing secretion. Residue Cys-20 is the site of N-palmitoyl cysteine attachment. Cys-20 is lipidated: S-diacylglycerol cysteine.

It belongs to the LolB family. In terms of assembly, monomer.

It is found in the cell outer membrane. Plays a critical role in the incorporation of lipoproteins in the outer membrane after they are released by the LolA protein. This is Outer-membrane lipoprotein LolB from Vibrio atlanticus (strain LGP32) (Vibrio splendidus (strain Mel32)).